Consider the following 109-residue polypeptide: Protein GOLVEN 5 (109 aa).

An N-terminal signal peptide occupies residues 1–24; the sequence is MTNITSSFLCLLILLLFCLSFGYS. Residues 25–96 constitute a propeptide that is removed on maturation; the sequence is LHGDKDEVLS…EEDDLVAYTA (72 aa). Residues 54–88 are disordered; that stretch reads KKAQVRGRSGQEFSKETTKMMMKKTTKKETNVEEE. A Sulfotyrosine modification is found at tyrosine 98. Residue proline 106 is modified to Hydroxyproline.

Belongs to the RGF family. As to quaternary structure, binds to LRR receptor-like serine/threonine-protein kinases RGI1, RGI2 and RGI3 to trigger their dimerization with SERK proteins and subsequent signaling. As to expression, expressed in root tips.

The protein localises to the secreted. Its function is as follows. Signaling peptide (root growth factor) that maintains the postembryonic root stem cell niche in a PIN2-traffic dependent manner. Root growth factor that regulates the pattern of root growth and lateral root development by modulating the length and the number of cortical cells in the root apical meristem (RAM), and the anticlinal asymmetric cell divisions in lateral root initiation cells. Influences the longitudinal growth rate in the primary root in response to phosphate ion (Pi)-deprivation. In Arabidopsis thaliana (Mouse-ear cress), this protein is Protein GOLVEN 5.